A 131-amino-acid polypeptide reads, in one-letter code: uncharacterized protein (131 aa).

The 117-residue stretch at aspartate 8–cysteine 124 folds into the Response regulatory domain. A 4-aspartylphosphate modification is found at aspartate 57.

This is an uncharacterized protein from Leptolyngbya boryana (Plectonema boryanum).